The sequence spans 153 residues: 6,7-dimethyl-8-ribityllumazine synthase (153 aa).

Residues F21, 55-57 (AFE), and 79-81 (TVI) each bind 5-amino-6-(D-ribitylamino)uracil. 84-85 (AT) lines the (2S)-2-hydroxy-3-oxobutyl phosphate pocket. Residue H87 is the Proton donor of the active site. F112 is a binding site for 5-amino-6-(D-ribitylamino)uracil. R126 is a (2S)-2-hydroxy-3-oxobutyl phosphate binding site.

The protein belongs to the DMRL synthase family. As to quaternary structure, forms an icosahedral capsid composed of 60 subunits, arranged as a dodecamer of pentamers.

The enzyme catalyses (2S)-2-hydroxy-3-oxobutyl phosphate + 5-amino-6-(D-ribitylamino)uracil = 6,7-dimethyl-8-(1-D-ribityl)lumazine + phosphate + 2 H2O + H(+). It functions in the pathway cofactor biosynthesis; riboflavin biosynthesis; riboflavin from 2-hydroxy-3-oxobutyl phosphate and 5-amino-6-(D-ribitylamino)uracil: step 1/2. In terms of biological role, catalyzes the formation of 6,7-dimethyl-8-ribityllumazine by condensation of 5-amino-6-(D-ribitylamino)uracil with 3,4-dihydroxy-2-butanone 4-phosphate. This is the penultimate step in the biosynthesis of riboflavin. The protein is 6,7-dimethyl-8-ribityllumazine synthase of Bacillus cereus (strain 03BB102).